Reading from the N-terminus, the 808-residue chain is Phenylalanine--tRNA ligase beta subunit (808 aa).

The region spanning 40–149 (RPELDFVKIV…DQAEVGKTIR (110 aa)) is the tRNA-binding domain. Positions 407-484 (HKEVRIHTDI…RTKGYDTIQV (78 aa)) constitute a B5 domain. Mg(2+)-binding residues include D462, D468, E471, and E472. Positions 716–808 (SQFPEAEIDL…LAGKNGFVLR (93 aa)) constitute an FDX-ACB domain.

The protein belongs to the phenylalanyl-tRNA synthetase beta subunit family. Type 1 subfamily. As to quaternary structure, tetramer of two alpha and two beta subunits. Requires Mg(2+) as cofactor.

It is found in the cytoplasm. The catalysed reaction is tRNA(Phe) + L-phenylalanine + ATP = L-phenylalanyl-tRNA(Phe) + AMP + diphosphate + H(+). The protein is Phenylalanine--tRNA ligase beta subunit of Leptospira interrogans serogroup Icterohaemorrhagiae serovar Lai (strain 56601).